The chain runs to 733 residues: uncharacterized protein (733 aa).

A helical membrane pass occupies residues 174–194; that stretch reads WAVMILASLRPELFGPIIIAG.

Its subcellular location is the membrane. This is an uncharacterized protein from Rhizobium meliloti (Ensifer meliloti).